Here is a 125-residue protein sequence, read N- to C-terminus: MEPDGTYEPGIVGIRFCQECNNMLYPKEDKENRILLYACRNCDYQQEADNSCIYVNKITHEVDELTQIIADVSQDPTLPRTEDHPCQKCGHKEAVFFQSHSARAEDAMRLYYVCTAPHCGHRWTE.

The residue at position 1 (Met-1) is an N-acetylmethionine. Cys-17, Cys-20, Cys-39, Cys-42, Cys-86, Cys-89, Cys-114, and Cys-119 together coordinate Zn(2+). The segment at 17-42 (CQECNNMLYPKEDKENRILLYACRNC) adopts a C4-type zinc-finger fold. The TFIIS-type zinc finger occupies 82 to 124 (EDHPCQKCGHKEAVFFQSHSARAEDAMRLYYVCTAPHCGHRWT).

Belongs to the archaeal RpoM/eukaryotic RPA12/RPB9/RPC11 RNA polymerase family. As to quaternary structure, component of the RNA polymerase II (Pol II) core complex consisting of 12 subunits: a ten-subunit catalytic core composed of POLR2A/RPB1, POLR2B/RPB2, POLR2C/RPB3, POLR2I/RPB9, POLR2J/RPB11, POLR2E/RPABC1, POLR2F/RPABC2, POLR2H/RPABC3, POLR2K/RPABC4 and POLR2L/RPABC5 and a mobile stalk composed of two subunits POLR2D/RPB4 and POLR2G/RPB7, protruding from the core and functioning primarily in transcription initiation. Part of Pol II(G) complex, in which Pol II core associates with an additional subunit POLR2M; unlike conventional Pol II, Pol II(G) functions as a transcriptional repressor. Part of TBP-based Pol II pre-initiation complex (PIC), in which Pol II core assembles with general transcription factors and other specific initiation factors including GTF2E1, GTF2E2, GTF2F1, GTF2F2, TCEA1, ERCC2, ERCC3, GTF2H2, GTF2H3, GTF2H4, GTF2H5, GTF2A1, GTF2A2, GTF2B and TBP; this large multi-subunit PIC complex mediates DNA unwinding and targets Pol II core to the transcription start site where the first phosphodiester bond forms.

The protein resides in the nucleus. Its subcellular location is the nucleolus. DNA-dependent RNA polymerase catalyzes the transcription of DNA into RNA using the four ribonucleoside triphosphates as substrates. Component of RNA polymerase II which synthesizes mRNA precursors and many functional non-coding RNAs. Pol II is the central component of the basal RNA polymerase II transcription machinery. It is composed of mobile elements that move relative to each other. POLR2I/RPB9 is part of the upper jaw surrounding the central large cleft and thought to grab the incoming DNA template. This is DNA-directed RNA polymerase II subunit RPB9 (POLR2I) from Bos taurus (Bovine).